The primary structure comprises 245 residues: Small ribosomal subunit protein uS3 (245 aa).

In terms of domain architecture, KH type-2 spans 39 to 107 (IRKAIREKLK…EVRVNLVEIR (69 aa)). The tract at residues 216-245 (DKRLETSGQSRARANTNQRGPASGAQAAGA) is disordered. Residues 221 to 235 (TSGQSRARANTNQRG) are compositionally biased toward polar residues.

It belongs to the universal ribosomal protein uS3 family. As to quaternary structure, part of the 30S ribosomal subunit. Forms a tight complex with proteins S10 and S14.

Functionally, binds the lower part of the 30S subunit head. Binds mRNA in the 70S ribosome, positioning it for translation. The polypeptide is Small ribosomal subunit protein uS3 (Hyphomonas neptunium (strain ATCC 15444)).